We begin with the raw amino-acid sequence, 590 residues long: Probable metalloendopeptidase G1-type (590 aa).

Position 41 (His41) interacts with Zn(2+). Glu44 is a catalytic residue. His45 lines the Zn(2+) pocket.

Belongs to the peptidase M44 family. Requires Zn(2+) as cofactor.

In terms of biological role, seems to be involved in viral proteins maturation by cleavage at Ala-Gly-|-Xaa motifs. The polypeptide is Probable metalloendopeptidase G1-type (GP045L) (Oryctolagus cuniculus (Rabbit)).